The sequence spans 147 residues: Thyrotropin subunit beta (147 aa).

Residues 1–20 (MRVVLLASGVLCLLAGQVLS) form the signal peptide. 6 disulfides stabilise this stretch: cysteine 22–cysteine 72, cysteine 36–cysteine 87, cysteine 39–cysteine 126, cysteine 47–cysteine 103, cysteine 51–cysteine 105, and cysteine 108–cysteine 115. N-linked (GlcNAc...) asparagine glycosylation is present at asparagine 43.

The protein belongs to the glycoprotein hormones subunit beta family. As to quaternary structure, heterodimer of a common alpha chain and a unique beta chain which confers biological specificity to thyrotropin, lutropin, follitropin and gonadotropin.

The protein resides in the secreted. Functionally, indispensable for the control of thyroid structure and metabolism. May play some role in the biological processes of the immature fishes. The protein is Thyrotropin subunit beta (tshb) of Anguilla japonica (Japanese eel).